Reading from the N-terminus, the 377-residue chain is N-acetyldiaminopimelate deacetylase (377 aa).

Asp-70 is an active-site residue. The active-site Proton acceptor is the Glu-129.

Belongs to the peptidase M20A family. N-acetyldiaminopimelate deacetylase subfamily.

The catalysed reaction is N-acetyl-(2S,6S)-2,6-diaminopimelate + H2O = (2S,6S)-2,6-diaminopimelate + acetate. The protein operates within amino-acid biosynthesis; L-lysine biosynthesis via DAP pathway; LL-2,6-diaminopimelate from (S)-tetrahydrodipicolinate (acetylase route): step 3/3. Functionally, catalyzes the conversion of N-acetyl-diaminopimelate to diaminopimelate and acetate. In Streptococcus thermophilus (strain ATCC BAA-491 / LMD-9), this protein is N-acetyldiaminopimelate deacetylase.